The following is a 191-amino-acid chain: Elongation factor P (191 aa).

Lysine 34 carries the post-translational modification N6-(3,6-diaminohexanoyl)-5-hydroxylysine.

This sequence belongs to the elongation factor P family. May be beta-lysylated on the epsilon-amino group of Lys-34 by the combined action of EpmA and EpmB, and then hydroxylated on the C5 position of the same residue by EpmC (if this protein is present). Lysylation is critical for the stimulatory effect of EF-P on peptide-bond formation. The lysylation moiety may extend toward the peptidyltransferase center and stabilize the terminal 3-CCA end of the tRNA. Hydroxylation of the C5 position on Lys-34 may allow additional potential stabilizing hydrogen-bond interactions with the P-tRNA.

It is found in the cytoplasm. The protein operates within protein biosynthesis; polypeptide chain elongation. Involved in peptide bond synthesis. Alleviates ribosome stalling that occurs when 3 or more consecutive Pro residues or the sequence PPG is present in a protein, possibly by augmenting the peptidyl transferase activity of the ribosome. Modification of Lys-34 is required for alleviation. This is Elongation factor P from Colwellia psychrerythraea (strain 34H / ATCC BAA-681) (Vibrio psychroerythus).